The primary structure comprises 357 residues: Alanine racemase (357 aa).

Lys-33 (proton acceptor; specific for D-alanine) is an active-site residue. Lys-33 is modified (N6-(pyridoxal phosphate)lysine). Arg-129 lines the substrate pocket. The active-site Proton acceptor; specific for L-alanine is the Tyr-253. Met-301 serves as a coordination point for substrate.

The protein belongs to the alanine racemase family. Pyridoxal 5'-phosphate serves as cofactor.

The enzyme catalyses L-alanine = D-alanine. It functions in the pathway amino-acid biosynthesis; D-alanine biosynthesis; D-alanine from L-alanine: step 1/1. In terms of biological role, catalyzes the interconversion of L-alanine and D-alanine. May also act on other amino acids. This Pseudomonas entomophila (strain L48) protein is Alanine racemase (alr).